Here is a 210-residue protein sequence, read N- to C-terminus: Probable GTP-binding protein EngB (210 aa).

One can recognise an EngB-type G domain in the interval 25-199 (CGIEVAFAGR…RQKLDSWFSE (175 aa)). GTP-binding positions include 33–40 (GRSNAGKS), 60–64 (GRTQL), 78–81 (DLPG), 145–148 (TKAD), and 178–180 (FSS). Mg(2+) is bound by residues Ser40 and Thr62.

Belongs to the TRAFAC class TrmE-Era-EngA-EngB-Septin-like GTPase superfamily. EngB GTPase family. It depends on Mg(2+) as a cofactor.

Functionally, necessary for normal cell division and for the maintenance of normal septation. In Salmonella paratyphi C (strain RKS4594), this protein is Probable GTP-binding protein EngB.